Reading from the N-terminus, the 290-residue chain is RWD domain-containing protein 2B (290 aa).

The RWD domain maps to serine 12–tyrosine 136.

In Mus musculus (Mouse), this protein is RWD domain-containing protein 2B (Rwdd2b).